Reading from the N-terminus, the 245-residue chain is Adenosylcobinamide-GDP ribazoletransferase (245 aa).

5 helical membrane passes run 31-51 (FGRA…VLYA), 61-81 (PLLQ…ALHL), 113-133 (VAVV…AALL), 138-158 (AGLL…LFLT), and 192-212 (LAFG…FAWL).

It belongs to the CobS family. It depends on Mg(2+) as a cofactor.

It is found in the cell inner membrane. It carries out the reaction alpha-ribazole + adenosylcob(III)inamide-GDP = adenosylcob(III)alamin + GMP + H(+). The enzyme catalyses alpha-ribazole 5'-phosphate + adenosylcob(III)inamide-GDP = adenosylcob(III)alamin 5'-phosphate + GMP + H(+). It functions in the pathway cofactor biosynthesis; adenosylcobalamin biosynthesis; adenosylcobalamin from cob(II)yrinate a,c-diamide: step 7/7. Functionally, joins adenosylcobinamide-GDP and alpha-ribazole to generate adenosylcobalamin (Ado-cobalamin). Also synthesizes adenosylcobalamin 5'-phosphate from adenosylcobinamide-GDP and alpha-ribazole 5'-phosphate. The protein is Adenosylcobinamide-GDP ribazoletransferase of Pseudomonas aeruginosa (strain UCBPP-PA14).